The primary structure comprises 550 residues: Aldehyde dehydrogenase family 3 member I1, chloroplastic (550 aa).

The transit peptide at 1–59 (MTKLLEINHIQTLCFAKGFSPARLNVATSPFRISRRGGGGYCSNACIPYRLKFTCYATL) directs the protein to the chloroplast. 259 to 264 (GGARVA) is a binding site for NAD(+). Residue Glu281 is the Proton acceptor of the active site. The Nucleophile role is filled by Cys316.

The protein belongs to the aldehyde dehydrogenase family. Homodimer and homomultimer.

It localises to the plastid. The protein localises to the chloroplast. The catalysed reaction is an aldehyde + NAD(+) + H2O = a carboxylate + NADH + 2 H(+). Thiol-based regulation. Inactivation after dimerization under oxidizing conditions. Functionally, involved in oxidative stress tolerance by detoxifying reactive aldehydes derived from lipid peroxidation. Medium- to long-chain saturated aldehydes are preferred substrates, while the short-chain aldehyde propanal is a weak substrate. Can use both NAD(+) and NADP(+), but the coenzyme preference is substrate dependent. This Arabidopsis thaliana (Mouse-ear cress) protein is Aldehyde dehydrogenase family 3 member I1, chloroplastic (ALDH3I1).